The following is a 204-amino-acid chain: Molybdenum cofactor guanylyltransferase (204 aa).

Residues 12–14, Lys-25, Asn-53, Asp-71, and Asp-101 each bind GTP; that span reads LAG. Residue Asp-101 participates in Mg(2+) binding.

This sequence belongs to the MobA family. In terms of assembly, monomer. The cofactor is Mg(2+).

The protein resides in the cytoplasm. The catalysed reaction is Mo-molybdopterin + GTP + H(+) = Mo-molybdopterin guanine dinucleotide + diphosphate. Functionally, transfers a GMP moiety from GTP to Mo-molybdopterin (Mo-MPT) cofactor (Moco or molybdenum cofactor) to form Mo-molybdopterin guanine dinucleotide (Mo-MGD) cofactor. In Ralstonia pickettii (strain 12J), this protein is Molybdenum cofactor guanylyltransferase.